An 880-amino-acid polypeptide reads, in one-letter code: Valine--tRNA ligase (880 aa).

Positions 46–56 (PNVTGKLHLGH) match the 'HIGH' region motif. The 'KMSKS' region motif lies at 520-524 (KMSKS). Residue K523 coordinates ATP. A coiled-coil region spans residues 808–880 (LAGLINIEEE…KARIAELKEN (73 aa)).

This sequence belongs to the class-I aminoacyl-tRNA synthetase family. ValS type 1 subfamily. Monomer.

The protein resides in the cytoplasm. The catalysed reaction is tRNA(Val) + L-valine + ATP = L-valyl-tRNA(Val) + AMP + diphosphate. Functionally, catalyzes the attachment of valine to tRNA(Val). As ValRS can inadvertently accommodate and process structurally similar amino acids such as threonine, to avoid such errors, it has a 'posttransfer' editing activity that hydrolyzes mischarged Thr-tRNA(Val) in a tRNA-dependent manner. The sequence is that of Valine--tRNA ligase from Lactococcus lactis subsp. lactis (strain IL1403) (Streptococcus lactis).